A 235-amino-acid chain; its full sequence is 2-C-methyl-D-erythritol 4-phosphate cytidylyltransferase (235 aa).

This sequence belongs to the IspD/TarI cytidylyltransferase family. IspD subfamily.

It catalyses the reaction 2-C-methyl-D-erythritol 4-phosphate + CTP + H(+) = 4-CDP-2-C-methyl-D-erythritol + diphosphate. It participates in isoprenoid biosynthesis; isopentenyl diphosphate biosynthesis via DXP pathway; isopentenyl diphosphate from 1-deoxy-D-xylulose 5-phosphate: step 2/6. Its function is as follows. Catalyzes the formation of 4-diphosphocytidyl-2-C-methyl-D-erythritol from CTP and 2-C-methyl-D-erythritol 4-phosphate (MEP). This chain is 2-C-methyl-D-erythritol 4-phosphate cytidylyltransferase, found in Pseudomonas putida (strain ATCC 47054 / DSM 6125 / CFBP 8728 / NCIMB 11950 / KT2440).